We begin with the raw amino-acid sequence, 791 residues long: Linear element protein rec10 (791 aa).

Disordered regions lie at residues 462 to 523 (NSVP…AKSN) and 644 to 672 (LLDG…TLIS). A Nuclear localization signal motif is present at residues 485–492 (QRRKDGKF). Basic residues predominate over residues 493 to 503 (AKSTKRKKQKS). Over residues 644-657 (LLDGTCSSPPNNEC) the composition is skewed to polar residues.

Component of linear elements (LinEs), which are similar to synaptonemal complexes, at least composed of rec27, rec25, rec10 and mug20. Interacts with rec25; the interaction is direct. Interacts with hop1 (via N-terminus); the interaction is direct. Interacts with rec15 (via C-terminus); the interaction is direct.

The protein localises to the nucleus. Its subcellular location is the chromosome. Functionally, organizes linear element components on chromosomes and is thus required for meiotic DNA recombination. This is Linear element protein rec10 from Schizosaccharomyces pombe (strain 972 / ATCC 24843) (Fission yeast).